The following is a 204-amino-acid chain: Large ribosomal subunit protein bL25 (204 aa).

The interval 1-23 (MSETLHLSAETRDRAGKGASRAL) is disordered.

It belongs to the bacterial ribosomal protein bL25 family. CTC subfamily. In terms of assembly, part of the 50S ribosomal subunit; part of the 5S rRNA/L5/L18/L25 subcomplex. Contacts the 5S rRNA. Binds to the 5S rRNA independently of L5 and L18.

In terms of biological role, this is one of the proteins that binds to the 5S RNA in the ribosome where it forms part of the central protuberance. This is Large ribosomal subunit protein bL25 from Novosphingobium aromaticivorans (strain ATCC 700278 / DSM 12444 / CCUG 56034 / CIP 105152 / NBRC 16084 / F199).